The chain runs to 406 residues: Phosphopentomutase (406 aa).

The Mn(2+) site is built by aspartate 10, aspartate 305, histidine 310, aspartate 346, histidine 347, and histidine 358.

It belongs to the phosphopentomutase family. The cofactor is Mn(2+).

The protein localises to the cytoplasm. It carries out the reaction 2-deoxy-alpha-D-ribose 1-phosphate = 2-deoxy-D-ribose 5-phosphate. It catalyses the reaction alpha-D-ribose 1-phosphate = D-ribose 5-phosphate. It participates in carbohydrate degradation; 2-deoxy-D-ribose 1-phosphate degradation; D-glyceraldehyde 3-phosphate and acetaldehyde from 2-deoxy-alpha-D-ribose 1-phosphate: step 1/2. In terms of biological role, isomerase that catalyzes the conversion of deoxy-ribose 1-phosphate (dRib-1-P) and ribose 1-phosphate (Rib-1-P) to deoxy-ribose 5-phosphate (dRib-5-P) and ribose 5-phosphate (Rib-5-P), respectively. This is Phosphopentomutase from Photobacterium profundum (strain SS9).